We begin with the raw amino-acid sequence, 177 residues long: Biotin-dependent acetyl-/propionyl-coenzyme A carboxylase epsilon subunit (177 aa).

Residues 1 to 112 (MGTCPCESSE…TEKPLHPHEP (112 aa)) form a disordered region. Residues 18-100 (VSGTNEVSDG…SDGNETNNPA (83 aa)) are compositionally biased toward polar residues.

Interacts with the AccA3/AccD5 biotin-dependent acyl-CoA carboxylase complex. Interacts with the AccA3/AccD6 complex. Is also part of the long-chain acyl-CoA carboxylase (LCC) complex, which is composed of AccA3, AccD4, AccD5 and AccE5. The four subunits are essential for activity, but AccD5, together with AccE5, probably plays a structural role rather than a catalytic one.

Stimulates activity of the AccA3/AccD5 biotin-dependent acyl-CoA carboxylase complex. Interacts with AccD5 and modulates its carboxylase activity for acetyl-CoA and propionyl-CoA. Inhibits activity of the AccA3/AccD6 complex. Is also required for the activity of the long-chain acyl-CoA carboxylase (LCC) complex. In Mycobacterium tuberculosis (strain ATCC 25618 / H37Rv), this protein is Biotin-dependent acetyl-/propionyl-coenzyme A carboxylase epsilon subunit.